We begin with the raw amino-acid sequence, 1198 residues long: RNA2 polyprotein (1198 aa).

In terms of processing, specific enzymatic cleavages in vivo by the P1 encoded 3C-like protease yield mature proteins.

It localises to the host cell junction. It is found in the host plasmodesma. The protein resides in the virion. Its function is as follows. Transports viral genome to neighboring plant cells directly through plasmosdesmata, without any budding. The movement protein allows efficient cell to cell propagation, by bypassing the host cell wall barrier. Acts by forming a tubular structure at the host plasmodesmata, enlarging it enough to allow free passage of virion capsids. In terms of biological role, capsid proteins VP35, VP26, and VP23 form a capsid enclosing the viral positive strand RNA genome. Together they form an icosahedral capsid pseudo T=3 with a diameter of approximately 30 nm (Potential). The sequence is that of RNA2 polyprotein from Tomato torrado virus (isolate Solanum lycopersicum/Spain/PRIToTV0301/-) (ToTV).